We begin with the raw amino-acid sequence, 78 residues long: Large ribosomal subunit protein bL28 (78 aa).

Residues Met1–His20 form a disordered region.

The protein belongs to the bacterial ribosomal protein bL28 family.

The protein is Large ribosomal subunit protein bL28 of Stutzerimonas stutzeri (strain A1501) (Pseudomonas stutzeri).